Reading from the N-terminus, the 324-residue chain is Acetyl-coenzyme A carboxylase carboxyl transferase subunit beta (324 aa).

The segment covering 1-16 has biased composition (low complexity); it reads MTKNNNDLSNSSSNPP. Residues 1–51 form a disordered region; sequence MTKNNNDLSNSSSNPPSNRPVAGKEAELEIQRETHAAQSGQSESWLSRPIP. A compositionally biased stretch (basic and acidic residues) spans 22–35; that stretch reads AGKEAELEIQRETH. Residues 36 to 45 are compositionally biased toward polar residues; the sequence is AAQSGQSESW. The CoA carboxyltransferase N-terminal domain occupies 68–324; the sequence is PSTECPQCHS…YRLLAKLTHV (257 aa). Positions 72, 75, 91, and 94 each coordinate Zn(2+). The segment at 72-94 adopts a C4-type zinc-finger fold; the sequence is CPQCHSMITNTALIFNAYVCPHC.

This sequence belongs to the AccD/PCCB family. As to quaternary structure, acetyl-CoA carboxylase is a heterohexamer composed of biotin carboxyl carrier protein (AccB), biotin carboxylase (AccC) and two subunits each of ACCase subunit alpha (AccA) and ACCase subunit beta (AccD). Zn(2+) is required as a cofactor.

The protein resides in the cytoplasm. The catalysed reaction is N(6)-carboxybiotinyl-L-lysyl-[protein] + acetyl-CoA = N(6)-biotinyl-L-lysyl-[protein] + malonyl-CoA. It participates in lipid metabolism; malonyl-CoA biosynthesis; malonyl-CoA from acetyl-CoA: step 1/1. Its function is as follows. Component of the acetyl coenzyme A carboxylase (ACC) complex. Biotin carboxylase (BC) catalyzes the carboxylation of biotin on its carrier protein (BCCP) and then the CO(2) group is transferred by the transcarboxylase to acetyl-CoA to form malonyl-CoA. The sequence is that of Acetyl-coenzyme A carboxylase carboxyl transferase subunit beta from Psychrobacter sp. (strain PRwf-1).